The primary structure comprises 117 residues: Large ribosomal subunit protein uL24 (117 aa).

Basic residues predominate over residues 1 to 10 (MSKQPRKQRK). Positions 1–28 (MSKQPRKQRKALYNAPAHARGKHMSATL) are disordered.

The protein belongs to the universal ribosomal protein uL24 family. Part of the 50S ribosomal subunit.

In terms of biological role, one of two assembly initiator proteins, it binds directly to the 5'-end of the 23S rRNA, where it nucleates assembly of the 50S subunit. Its function is as follows. Located at the polypeptide exit tunnel on the outside of the subunit. The chain is Large ribosomal subunit protein uL24 from Methanobrevibacter smithii (strain ATCC 35061 / DSM 861 / OCM 144 / PS).